A 145-amino-acid chain; its full sequence is uncharacterized protein (145 aa).

A run of 2 helical transmembrane segments spans residues 20–40 and 116–136; these read LIGPFLFAIIYWSIFIEGMFF and MIMLLYAEIIIYSSFSCVLSA.

It is found in the membrane. This is an uncharacterized protein from Saccharomyces cerevisiae (strain ATCC 204508 / S288c) (Baker's yeast).